The primary structure comprises 137 residues: MLVIILGIIGLLASSNLVSSSTSTRVGGHLPLTFDPPENELGYWCTYVESCRFCWDCEDGICTSRVWGNNSTSIVENDYVKYCEVSRWGNLCRYDVEEHIYYSMNCSDPKPWNPYKIARKEWKKNEYLRKDLKKDEF.

Positions 1 to 20 (MLVIILGIIGLLASSNLVSS) are cleaved as a signal peptide. Residues asparagine 69, asparagine 70, and asparagine 105 are each glycosylated (N-linked (GlcNAc...) asparagine; by host).

It belongs to the asfivirus MGF 110 family.

Plays a role in virus cell tropism, and may be required for efficient virus replication in macrophages. This is Protein MGF 110-7L from African swine fever virus (isolate Tick/South Africa/Pretoriuskop Pr4/1996) (ASFV).